The following is a 358-amino-acid chain: Zinc transporter ZIP1 (358 aa).

At 1–7 (MDLLFAK) the chain is on the extracellular side. The helical transmembrane segment at 8–28 (IICIGIFLVVTTFGCFIPHLM) threads the bilayer. Topologically, residues 29–53 (GLYKEKENEEKNKRVKNILSNLNCF) are cytoplasmic. Residues 54-74 (GSGFIFSIIMFHLLPETIHII) traverse the membrane as a helical segment. Residues 75 to 91 (SDHGNIRIFNTSDSQMK) lie on the Extracellular side of the membrane. Residues 92–112 (ILYIFFFVFIGFCMQLGLEYV) traverse the membrane as a helical segment. At 113–186 (LPVDTNICCV…GKFLEILTLQ (74 aa)) the chain is on the cytoplasmic side. Residues 187 to 207 (SFFLTISLAIHSCIEGMIIGT) traverse the membrane as a helical segment. Over 208–213 (STDVNY) the chain is Extracellular. Residues 214–234 (VFISSFCILLHKWIAGVTVSL) form a helical membrane-spanning segment. Topologically, residues 235 to 246 (SLNSNNMNKTLK) are cytoplasmic. The chain crosses the membrane as a helical span at residues 247–267 (AILLLTFVFASPLGIVLGHMA). The Extracellular portion of the chain corresponds to 268–273 (KSAGQK). The helical transmembrane segment at 274 to 294 (VTCLINAVSIGTLLFIGCEIL) threads the bilayer. Residues 295–310 (LNEIKQNISRKVRLCK) lie on the Cytoplasmic side of the membrane. The helical transmembrane segment at 311 to 331 (WLSFCFSCLIAFALISFTTSM) threads the bilayer. Residues 332–358 (APHTHGDIDTHVHVHHHDHDHDHGHNH) are Extracellular-facing.

This sequence belongs to the ZIP transporter (TC 2.A.5) family. As to quaternary structure, homodimer.

It is found in the plastid. The protein localises to the apicoplast. The protein resides in the cell membrane. It catalyses the reaction Zn(2+)(in) = Zn(2+)(out). It carries out the reaction Fe(2+)(in) = Fe(2+)(out). In terms of biological role, transporter for the divalent zinc cation. Mediates the influx of zinc into cells from extracellular space. Can transport divalent iron ions. Does not transport manganese and cadmium cations. This is Zinc transporter ZIP1 from Plasmodium falciparum (isolate 3D7).